The chain runs to 180 residues: Large ribosomal subunit protein uL16 (180 aa).

Belongs to the universal ribosomal protein uL16 family.

This is Large ribosomal subunit protein uL16 from Pyrobaculum aerophilum (strain ATCC 51768 / DSM 7523 / JCM 9630 / CIP 104966 / NBRC 100827 / IM2).